Consider the following 217-residue polypeptide: Ribosomal RNA small subunit methyltransferase G (217 aa).

Residues Gly79, Leu84, 102-104 (DST), 130-131 (VE), and Arg144 each bind S-adenosyl-L-methionine.

This sequence belongs to the methyltransferase superfamily. RNA methyltransferase RsmG family.

It is found in the cytoplasm. Functionally, specifically methylates the N7 position of a guanine in 16S rRNA. The sequence is that of Ribosomal RNA small subunit methyltransferase G from Chlorobaculum tepidum (strain ATCC 49652 / DSM 12025 / NBRC 103806 / TLS) (Chlorobium tepidum).